The chain runs to 117 residues: MVRVKRGNVARKRRKKILQLAKGYRGAHSRLFRVANQQVMKALRYSYVGRKQKKRVFRKLWISRINASSREKGVTYSTLINSFKKSKINLNRKMLAQIAVLDCSTFYKLIDDAKSPN.

The protein belongs to the bacterial ribosomal protein bL20 family.

The protein resides in the plastid. It localises to the chloroplast. Functionally, binds directly to 23S ribosomal RNA and is necessary for the in vitro assembly process of the 50S ribosomal subunit. It is not involved in the protein synthesizing functions of that subunit. This Thalassiosira pseudonana (Marine diatom) protein is Large ribosomal subunit protein bL20c.